We begin with the raw amino-acid sequence, 119 residues long: Large ribosomal subunit protein bL20 (119 aa).

It belongs to the bacterial ribosomal protein bL20 family.

In terms of biological role, binds directly to 23S ribosomal RNA and is necessary for the in vitro assembly process of the 50S ribosomal subunit. It is not involved in the protein synthesizing functions of that subunit. The sequence is that of Large ribosomal subunit protein bL20 from Rhodopseudomonas palustris (strain ATCC BAA-98 / CGA009).